A 126-amino-acid polypeptide reads, in one-letter code: Glycine cleavage system H protein (126 aa).

The region spanning 24–106 is the Lipoyl-binding domain; that stretch reads TITVGITDHA…YGEGWFFRMK (83 aa). Position 65 is an N6-lipoyllysine (Lys65).

It belongs to the GcvH family. In terms of assembly, the glycine cleavage system is composed of four proteins: P, T, L and H. Requires (R)-lipoate as cofactor.

The glycine cleavage system catalyzes the degradation of glycine. The H protein shuttles the methylamine group of glycine from the P protein to the T protein. The sequence is that of Glycine cleavage system H protein from Psychrobacter arcticus (strain DSM 17307 / VKM B-2377 / 273-4).